The primary structure comprises 87 residues: Cell division topological specificity factor (87 aa).

This sequence belongs to the MinE family.

Its function is as follows. Prevents the cell division inhibition by proteins MinC and MinD at internal division sites while permitting inhibition at polar sites. This ensures cell division at the proper site by restricting the formation of a division septum at the midpoint of the long axis of the cell. This Roseiflexus castenholzii (strain DSM 13941 / HLO8) protein is Cell division topological specificity factor.